Reading from the N-terminus, the 517-residue chain is MQNNIIIFDTTLRDGEQALKASLTVKEKLQIALALERLGVDVMEVGFPVSSAGDFESVQTIARHIKNSRVCALSRAMDKDIDIAADALKVAEAFRIHTFIATSALHVEAKLRRTFDDVVEMAIQAVKRARRYTDDVEFSCEDAGRTGVDNICRIVEAAIKAGATTVNIPDTVGFCLPTEYGNIINQVMNRVPNIDKAVISVHCHNDLGMATANSLTAVQNGARQIECTINGIGERAGNTALEEVVMAIKTRQDIFKGLDTRINTQEIHRVSQMVSQLCNMPIQPNKAIVGSNAFAHSSGIHQDGMVKNKNTYEIMSPETIGLKKEKLNLTARSGRAAVKSHMDAMGYQQNDYDLDKLYAAFLKLADKKGQVFDYDLEALAFIDMQQGDEDRLSLDVITSQTISNLPASAFVQVELDGKKISQVSNGGNGPVDAVYNAILAITDMDITMLHYNLTAKGEGAEALGQVDIVVEHKGRRFHGVGLATDIVESSARALIHAINAIYRANKVADLKSHKISQ.

In terms of domain architecture, Pyruvate carboxyltransferase spans 5–268 (IIIFDTTLRD…DTRINTQEIH (264 aa)). Positions 14, 202, 204, and 238 each coordinate Mn(2+). The interval 393–517 (SLDVITSQTI…ADLKSHKISQ (125 aa)) is regulatory domain.

The protein belongs to the alpha-IPM synthase/homocitrate synthase family. LeuA type 1 subfamily. In terms of assembly, homodimer. The cofactor is Mn(2+).

Its subcellular location is the cytoplasm. It carries out the reaction 3-methyl-2-oxobutanoate + acetyl-CoA + H2O = (2S)-2-isopropylmalate + CoA + H(+). Its pathway is amino-acid biosynthesis; L-leucine biosynthesis; L-leucine from 3-methyl-2-oxobutanoate: step 1/4. Catalyzes the condensation of the acetyl group of acetyl-CoA with 3-methyl-2-oxobutanoate (2-ketoisovalerate) to form 3-carboxy-3-hydroxy-4-methylpentanoate (2-isopropylmalate). The sequence is that of 2-isopropylmalate synthase from Histophilus somni (strain 129Pt) (Haemophilus somnus).